Here is a 111-residue protein sequence, read N- to C-terminus: Putative protein YddJ (111 aa).

This Escherichia coli (strain K12) protein is Putative protein YddJ (yddJ).